We begin with the raw amino-acid sequence, 344 residues long: L-rhamnose-proton symporter (344 aa).

Helical transmembrane passes span 4 to 24 (AITM…CFYA), 38 to 58 (WSVG…AILL), 72 to 92 (TLLP…NYGL), 101 to 121 (MGIG…TPIL), 137 to 157 (TLLG…AGQL), 175 to 195 (LVLA…MNAA), 214 to 234 (LPSY…FCFI), 259 to 279 (VLLS…YAWG), 290 to 310 (MSWM…GLVL), and 321 to 341 (VGVL…VGLG).

This sequence belongs to the L-rhamnose transporter (TC 2.A.7.6) family.

It localises to the cell inner membrane. It carries out the reaction L-rhamnopyranose(in) + H(+)(in) = L-rhamnopyranose(out) + H(+)(out). Functionally, uptake of L-rhamnose across the cytoplasmic membrane with the concomitant transport of protons into the cell (symport system). This Enterobacter sp. (strain 638) protein is L-rhamnose-proton symporter.